A 469-amino-acid polypeptide reads, in one-letter code: MNPNQKIITIGSVSLTIATVCFLMQIAILATTVTLHFKQNECNPPANNQVVPCEPIIIERNITEIVYLNNITIEKEVCPEVAEYRNWSKPQCQITGFAPFSKDNSVRLSAGGDIWVTREPYVSCDPGKCYQFALGQGTTLDNKHSNGTIHDRIPHRTLLMNELGVPFHLGTKQVCIAWSSSSCHDGKAWLHVCVTGDDRNATASFIYDGMLVDSIGSWSQNILRTQESECVCINGTCTVVMTDGSASGNADTRVLFIREGKIIHISPLSGSAQHIEECSCYPRYPDVRCVCRDNWKGSNRPVIDIKMADYSINSGYVCSGLVGDTPRSDDSSSNSNCRDPNNERGNPGVKGWAFDNGDDVWMGRTISKDSRSGYETFRVIGGWTTPNSKSQVNRQVIVDSNNWSGYSGIFSVEGKSCINRCFYVELIRGRPQETRVWWTSNSIVVFCGTSGTYGTGSWPDGANINFMPI.

The Intravirion segment spans residues 1 to 6 (MNPNQK). A helical membrane pass occupies residues 7–29 (IITIGSVSLTIATVCFLMQIAIL). The involved in apical transport and lipid raft association stretch occupies residues 11-33 (GSVSLTIATVCFLMQIAILATTV). Topologically, residues 30–469 (ATTVTLHFKQ…DGANINFMPI (440 aa)) are virion surface. A hypervariable stalk region region spans residues 36-88 (HFKQNECNPPANNQVVPCEPIIIERNITEIVYLNNITIEKEVCPEVAEYRNWS). N61, N70, and N86 each carry an N-linked (GlcNAc...) asparagine; by host glycan. The segment at 91-469 (QCQITGFAPF…DGANINFMPI (379 aa)) is head of neuraminidase. Intrachain disulfides connect C92-C417, C124-C129, C183-C230, C232-C237, C278-C291, C280-C289, C318-C337, and C421-C447. R118 contributes to the substrate binding site. N146 carries an N-linked (GlcNAc...) asparagine; by host glycan. The active-site Proton donor/acceptor is D151. R152 lines the substrate pocket. N-linked (GlcNAc...) asparagine; by host glycans are attached at residues N200 and N234. 276–277 (EE) contributes to the substrate binding site. Substrate is bound at residue R292. D293, G297, and D324 together coordinate Ca(2+). Positions 324–349 (DTPRSDDSSSNSNCRDPNNERGNPGV) are disordered. A substrate-binding site is contributed by R371. Residue N402 is glycosylated (N-linked (GlcNAc...) asparagine; by host). The active-site Nucleophile is Y406.

Belongs to the glycosyl hydrolase 34 family. As to quaternary structure, homotetramer. Ca(2+) is required as a cofactor. N-glycosylated.

The protein resides in the virion membrane. The protein localises to the host apical cell membrane. The catalysed reaction is Hydrolysis of alpha-(2-&gt;3)-, alpha-(2-&gt;6)-, alpha-(2-&gt;8)- glycosidic linkages of terminal sialic acid residues in oligosaccharides, glycoproteins, glycolipids, colominic acid and synthetic substrates.. Its activity is regulated as follows. Inhibited by the neuraminidase inhibitors zanamivir (Relenza) and oseltamivir (Tamiflu). These drugs interfere with the release of progeny virus from infected cells and are effective against all influenza strains. Resistance to neuraminidase inhibitors is quite rare. Its function is as follows. Catalyzes the removal of terminal sialic acid residues from viral and cellular glycoconjugates. Cleaves off the terminal sialic acids on the glycosylated HA during virus budding to facilitate virus release. Additionally helps virus spread through the circulation by further removing sialic acids from the cell surface. These cleavages prevent self-aggregation and ensure the efficient spread of the progeny virus from cell to cell. Otherwise, infection would be limited to one round of replication. Described as a receptor-destroying enzyme because it cleaves a terminal sialic acid from the cellular receptors. May facilitate viral invasion of the upper airways by cleaving the sialic acid moieties on the mucin of the airway epithelial cells. Likely to plays a role in the budding process through its association with lipid rafts during intracellular transport. May additionally display a raft-association independent effect on budding. Plays a role in the determination of host range restriction on replication and virulence. Sialidase activity in late endosome/lysosome traffic seems to enhance virus replication. This is Neuraminidase from Influenza A virus (strain A/Turkey/Wisconsin/1/1966 H9N2).